The primary structure comprises 121 residues: Large ribosomal subunit protein bL19 (121 aa).

This sequence belongs to the bacterial ribosomal protein bL19 family.

Functionally, this protein is located at the 30S-50S ribosomal subunit interface and may play a role in the structure and function of the aminoacyl-tRNA binding site. The sequence is that of Large ribosomal subunit protein bL19 from Chlamydia trachomatis serovar L2 (strain ATCC VR-902B / DSM 19102 / 434/Bu).